A 314-amino-acid chain; its full sequence is Serine hydrolase-like protein 2 (314 aa).

Residues 33 to 293 (PPVLCLHGWL…GNHCVHMSEP (261 aa)) enclose the AB hydrolase-1 domain. Ser-108 is an active-site residue.

This sequence belongs to the AB hydrolase superfamily.

It localises to the cytoplasm. The protein localises to the perinuclear region. Its subcellular location is the peroxisome. In terms of biological role, probable serine hydrolase. May be related to cell muscle hypertrophy. In Homo sapiens (Human), this protein is Serine hydrolase-like protein 2 (SERHL2).